We begin with the raw amino-acid sequence, 135 residues long: Mediator of RNA polymerase II transcription subunit 10 (135 aa).

It belongs to the Mediator complex subunit 10 family. In terms of assembly, component of the Mediator complex, which is composed of MED1, MED4, MED6, MED7, MED8, MED9, MED10, MED11, MED12, MED13, MED13L, MED14, MED15, MED16, MED17, MED18, MED19, MED20, MED21, MED22, MED23, MED24, MED25, MED26, MED27, MED29, MED30, MED31, CCNC, CDK8 and CDC2L6/CDK11. The MED12, MED13, CCNC and CDK8 subunits form a distinct module termed the CDK8 module. Mediator containing the CDK8 module is less active than Mediator lacking this module in supporting transcriptional activation. Individual preparations of the Mediator complex lacking one or more distinct subunits have been variously termed ARC, CRSP, DRIP, PC2, SMCC and TRAP.

Its subcellular location is the nucleus. Its function is as follows. Component of the Mediator complex, a coactivator involved in the regulated transcription of nearly all RNA polymerase II-dependent genes. Mediator functions as a bridge to convey information from gene-specific regulatory proteins to the basal RNA polymerase II transcription machinery. Mediator is recruited to promoters by direct interactions with regulatory proteins and serves as a scaffold for the assembly of a functional preinitiation complex with RNA polymerase II and the general transcription factors. This is Mediator of RNA polymerase II transcription subunit 10 (Med10) from Mus musculus (Mouse).